Consider the following 363-residue polypeptide: Ataxin-3 (363 aa).

A Josephin domain is found at 1-180 (MESIFHERQE…DCEADQLLQM (180 aa)). Cysteine 14 serves as the catalytic Nucleophile. Histidine 119 functions as the Proton acceptor in the catalytic mechanism. The active site involves asparagine 134. Residues 192–209 (IGEETAQSRDQRLPRSDV) are compositionally biased toward basic and acidic residues. The segment at 192 to 212 (IGEETAQSRDQRLPRSDVDQA) is disordered. UIM domains lie at 227–246 (EDEE…IDME), 247–266 (DEEA…SRQS), and 337–356 (SEED…ARNH). A compositionally biased stretch (polar residues) spans 260–290 (MQGSRQSEFSNSLPQNASQPPHTSQTDSLSS). Positions 260–363 (MQGSRQSEFS…RNHLSTEEKK (104 aa)) are disordered. Positions 353–363 (ARNHLSTEEKK) are enriched in basic and acidic residues.

Widely expressed.

It is found in the nucleus matrix. The protein localises to the nucleus. The protein resides in the lysosome membrane. It carries out the reaction Thiol-dependent hydrolysis of ester, thioester, amide, peptide and isopeptide bonds formed by the C-terminal Gly of ubiquitin (a 76-residue protein attached to proteins as an intracellular targeting signal).. Deubiquitinating enzyme involved in protein homeostasis maintenance, transcription, cytoskeleton regulation, myogenesis and degradation of misfolded chaperone substrates. Binds long polyubiquitin chains and trims them, while it has weak or no activity against chains of 4 or less ubiquitins. Involved in degradation of misfolded chaperone substrates via its interaction with STUB1/CHIP: recruited to monoubiquitinated STUB1/CHIP, and restricts the length of ubiquitin chain attached to STUB1/CHIP substrates and preventing further chain extension. Interacts with key regulators of transcription and represses transcription: acts as a histone-binding protein that regulates transcription. Acts as a negative regulator of mTORC1 signaling in response to amino acid deprivation by mediating deubiquitination of RHEB, thereby promoting RHEB inactivation by the TSC-TBC complex. Regulates autophagy via the deubiquitination of 'Lys-402' of BECN1 leading to the stabilization of BECN1. This Gallus gallus (Chicken) protein is Ataxin-3 (ATXN3).